Reading from the N-terminus, the 206-residue chain is Thymidylate kinase (206 aa).

10 to 17 (GIDGAGKS) serves as a coordination point for ATP.

The protein belongs to the thymidylate kinase family.

The catalysed reaction is dTMP + ATP = dTDP + ADP. In terms of biological role, phosphorylation of dTMP to form dTDP in both de novo and salvage pathways of dTTP synthesis. This is Thymidylate kinase (tmk) from Neisseria meningitidis serogroup A / serotype 4A (strain DSM 15465 / Z2491).